A 346-amino-acid chain; its full sequence is D-alanine--D-alanine ligase A (346 aa).

The ATP-grasp domain occupies 138-332 (KRLFLAAGVE…FAELCERICR (195 aa)). 164–217 (QLGFPLVVKPNSQGSTVGLSIVHSQAELQPAIELAGRYGDEVMLERFVAGREVT) provides a ligand contact to ATP. Residues aspartate 286, glutamate 299, and asparagine 301 each coordinate Mg(2+).

The protein belongs to the D-alanine--D-alanine ligase family. The cofactor is Mg(2+). It depends on Mn(2+) as a cofactor.

The protein resides in the cytoplasm. The enzyme catalyses 2 D-alanine + ATP = D-alanyl-D-alanine + ADP + phosphate + H(+). The protein operates within cell wall biogenesis; peptidoglycan biosynthesis. Functionally, cell wall formation. In Pseudomonas aeruginosa (strain ATCC 15692 / DSM 22644 / CIP 104116 / JCM 14847 / LMG 12228 / 1C / PRS 101 / PAO1), this protein is D-alanine--D-alanine ligase A.